The primary structure comprises 209 residues: Thiamine-phosphate synthase (209 aa).

4-amino-2-methyl-5-(diphosphooxymethyl)pyrimidine-binding positions include 32 to 36 (QLRMK) and Asp64. Asp65 and Asp84 together coordinate Mg(2+). Thr103 lines the 4-amino-2-methyl-5-(diphosphooxymethyl)pyrimidine pocket. 129 to 131 (TTT) serves as a coordination point for 2-[(2R,5Z)-2-carboxy-4-methylthiazol-5(2H)-ylidene]ethyl phosphate. Residue Lys132 coordinates 4-amino-2-methyl-5-(diphosphooxymethyl)pyrimidine. Residue Gly165 coordinates 2-[(2R,5Z)-2-carboxy-4-methylthiazol-5(2H)-ylidene]ethyl phosphate.

It belongs to the thiamine-phosphate synthase family. Mg(2+) serves as cofactor.

It carries out the reaction 2-[(2R,5Z)-2-carboxy-4-methylthiazol-5(2H)-ylidene]ethyl phosphate + 4-amino-2-methyl-5-(diphosphooxymethyl)pyrimidine + 2 H(+) = thiamine phosphate + CO2 + diphosphate. It catalyses the reaction 2-(2-carboxy-4-methylthiazol-5-yl)ethyl phosphate + 4-amino-2-methyl-5-(diphosphooxymethyl)pyrimidine + 2 H(+) = thiamine phosphate + CO2 + diphosphate. The catalysed reaction is 4-methyl-5-(2-phosphooxyethyl)-thiazole + 4-amino-2-methyl-5-(diphosphooxymethyl)pyrimidine + H(+) = thiamine phosphate + diphosphate. The protein operates within cofactor biosynthesis; thiamine diphosphate biosynthesis; thiamine phosphate from 4-amino-2-methyl-5-diphosphomethylpyrimidine and 4-methyl-5-(2-phosphoethyl)-thiazole: step 1/1. Functionally, condenses 4-methyl-5-(beta-hydroxyethyl)thiazole monophosphate (THZ-P) and 2-methyl-4-amino-5-hydroxymethyl pyrimidine pyrophosphate (HMP-PP) to form thiamine monophosphate (TMP). The sequence is that of Thiamine-phosphate synthase from Bacteroides thetaiotaomicron (strain ATCC 29148 / DSM 2079 / JCM 5827 / CCUG 10774 / NCTC 10582 / VPI-5482 / E50).